We begin with the raw amino-acid sequence, 220 residues long: Peptide methionine sulfoxide reductase MsrA (220 aa).

Cysteine 54 is a catalytic residue.

It belongs to the MsrA Met sulfoxide reductase family.

It catalyses the reaction L-methionyl-[protein] + [thioredoxin]-disulfide + H2O = L-methionyl-(S)-S-oxide-[protein] + [thioredoxin]-dithiol. It carries out the reaction [thioredoxin]-disulfide + L-methionine + H2O = L-methionine (S)-S-oxide + [thioredoxin]-dithiol. Has an important function as a repair enzyme for proteins that have been inactivated by oxidation. Catalyzes the reversible oxidation-reduction of methionine sulfoxide in proteins to methionine. The chain is Peptide methionine sulfoxide reductase MsrA from Salinispora tropica (strain ATCC BAA-916 / DSM 44818 / JCM 13857 / NBRC 105044 / CNB-440).